The primary structure comprises 420 residues: Gamma-glutamyl phosphate reductase (420 aa).

This sequence belongs to the gamma-glutamyl phosphate reductase family.

Its subcellular location is the cytoplasm. It carries out the reaction L-glutamate 5-semialdehyde + phosphate + NADP(+) = L-glutamyl 5-phosphate + NADPH + H(+). It functions in the pathway amino-acid biosynthesis; L-proline biosynthesis; L-glutamate 5-semialdehyde from L-glutamate: step 2/2. Functionally, catalyzes the NADPH-dependent reduction of L-glutamate 5-phosphate into L-glutamate 5-semialdehyde and phosphate. The product spontaneously undergoes cyclization to form 1-pyrroline-5-carboxylate. This Cereibacter sphaeroides (strain ATCC 17029 / ATH 2.4.9) (Rhodobacter sphaeroides) protein is Gamma-glutamyl phosphate reductase.